Consider the following 424-residue polypeptide: MSKHPSRFAVAGVSHHTADVLALEAFRFGDEPAFLAAAQKKFAGALLLQTCNRVEVIVEGDAASLRDFLESQERKGFFLLEGREALRHLFSLAAGIDSMIVGEDQIIGQLKKSLADGEAACTASPFLSLCINKAVHVGVGVRRTTKINRGAVSVGSAAVLLAESELGTLEGRHILVVGSGEMGLLVAQALAAKHLTAMYVANRTFGRAVILAEKIGGVAVRMNELYHYITLSDVVISCTSAPHPVIHKTALKEAMRDRCWPVEGHPRPLILVDIAQPRDVEEGAGAIDGVRLFTIDDLRQVNEQTMSTRRAEAERAAEYVDDELDLFIRQLHRKSADDCIAALHTWAEAVRVRERDRALARLGNMDERTAGVIDDLSRVLTKKILTDATASIRACAEEGDRDAAEALVRALTRGSAADSREGTE.

Substrate-binding positions include 50-53, serine 98, 103-105, and glutamine 109; these read TCNR and EDQ. Cysteine 51 serves as the catalytic Nucleophile. NADP(+) is bound at residue 178-183; sequence GSGEMG.

Belongs to the glutamyl-tRNA reductase family. In terms of assembly, homodimer.

It catalyses the reaction (S)-4-amino-5-oxopentanoate + tRNA(Glu) + NADP(+) = L-glutamyl-tRNA(Glu) + NADPH + H(+). It participates in porphyrin-containing compound metabolism; protoporphyrin-IX biosynthesis; 5-aminolevulinate from L-glutamyl-tRNA(Glu): step 1/2. Catalyzes the NADPH-dependent reduction of glutamyl-tRNA(Glu) to glutamate 1-semialdehyde (GSA). In Methanoregula boonei (strain DSM 21154 / JCM 14090 / 6A8), this protein is Glutamyl-tRNA reductase.